The primary structure comprises 554 residues: Glucose-6-phosphate isomerase (554 aa).

Residue Glu359 is the Proton donor of the active site. Catalysis depends on residues His390 and Lys518.

Belongs to the GPI family.

It localises to the cytoplasm. It catalyses the reaction alpha-D-glucose 6-phosphate = beta-D-fructose 6-phosphate. The protein operates within carbohydrate biosynthesis; gluconeogenesis. It functions in the pathway carbohydrate degradation; glycolysis; D-glyceraldehyde 3-phosphate and glycerone phosphate from D-glucose: step 2/4. Catalyzes the reversible isomerization of glucose-6-phosphate to fructose-6-phosphate. The sequence is that of Glucose-6-phosphate isomerase from Ectopseudomonas mendocina (strain ymp) (Pseudomonas mendocina).